The following is a 515-amino-acid chain: Na(+)/H(+) antiporter NhaB (515 aa).

Helical transmembrane passes span 23–43, 45–65, 96–116, 136–156, 204–224, 245–265, 305–325, 349–369, 393–413, 449–469, and 480–500; these read LAII…NPFV, GWLL…CYPL, VVLL…LLLF, CLAS…AVVI, LMMH…VGEP, APIT…VEHF, ALIG…VGLI, FEEA…VAVI, LFYL…VGTV, ATPN…SPLI, and ALPY…FLLI.

The protein belongs to the NhaB Na(+)/H(+) (TC 2.A.34) antiporter family.

The protein resides in the cell inner membrane. The enzyme catalyses 2 Na(+)(in) + 3 H(+)(out) = 2 Na(+)(out) + 3 H(+)(in). In terms of biological role, na(+)/H(+) antiporter that extrudes sodium in exchange for external protons. The chain is Na(+)/H(+) antiporter NhaB from Photorhabdus laumondii subsp. laumondii (strain DSM 15139 / CIP 105565 / TT01) (Photorhabdus luminescens subsp. laumondii).